The primary structure comprises 232 residues: Zinc-finger homeodomain protein 5 (232 aa).

Positions 1–11 (MELSEHEEDAG) are enriched in acidic residues. Residues 1–25 (MELSEHEEDAGDVGGGCSSPPTPPH) are disordered. The segment at 40–86 (YHECLRNHAAASGGHVVDGCGEFMPASTEEPLACAACGCHRSFHRRD) adopts a ZF-HD dimerization-type; degenerate zinc-finger fold. The tract at residues 126-170 (GLPFPGYGTPSGGTGTTTASSSDERLRPSPVQPRRRSRTTFTREQ) is disordered. Residues 159–222 (RRRSRTTFTR…NNKHSFKQKQ (64 aa)) constitute a DNA-binding region (homeobox).

As to quaternary structure, homo- and heterodimer with other ZFHD proteins.

Its subcellular location is the nucleus. Putative transcription factor. The chain is Zinc-finger homeodomain protein 5 (ZHD5) from Oryza sativa subsp. indica (Rice).